A 236-amino-acid polypeptide reads, in one-letter code: Putative lipoprotein MlpA (236 aa).

Positions 1–21 are cleaved as a signal peptide; that stretch reads MTKNIVNTALVLVGAGSLLTG. Residue Cys22 is the site of N-palmitoyl cysteine attachment. Residue Cys22 is the site of S-diacylglycerol cysteine attachment.

The protein localises to the cell membrane. The protein is Putative lipoprotein MlpA (mlpA) of Myxococcus xanthus.